Reading from the N-terminus, the 224-residue chain is Ribonuclease 3 (224 aa).

The 123-residue stretch at 5 to 127 folds into the RNase III domain; it reads LERLCRRLNY…ILAAIYLDGG (123 aa). Residue glutamate 40 participates in Mg(2+) binding. Aspartate 44 is a catalytic residue. Mg(2+) is bound by residues aspartate 113 and glutamate 116. Glutamate 116 is an active-site residue. The DRBM domain maps to 154 to 224; that stretch reads DAKTQLQEFL…AKAMLEQLQG (71 aa).

It belongs to the ribonuclease III family. In terms of assembly, homodimer. Mg(2+) serves as cofactor.

The protein resides in the cytoplasm. The catalysed reaction is Endonucleolytic cleavage to 5'-phosphomonoester.. Functionally, digests double-stranded RNA. Involved in the processing of primary rRNA transcript to yield the immediate precursors to the large and small rRNAs (23S and 16S). Processes some mRNAs, and tRNAs when they are encoded in the rRNA operon. Processes pre-crRNA and tracrRNA of type II CRISPR loci if present in the organism. This chain is Ribonuclease 3, found in Legionella pneumophila (strain Paris).